A 1254-amino-acid polypeptide reads, in one-letter code: Protein transport protein Sec31A (1254 aa).

WD repeat units lie at residues 4 to 47 (KEIN…EIFE), 64 to 111 (SSPH…AGDS), 120 to 160 (KHTG…SPMT), 166 to 206 (QPQE…LIIK), 209 to 254 (DHSN…SPLK), 258 to 298 (NHTR…VLYE), and 301 to 341 (TSTQ…NDNA). A compositionally biased stretch (low complexity) spans 364–383 (TLPPLQLPQQTSPQSTITPL). Residues 364 to 386 (TLPPLQLPQQTSPQSTITPLKKP) form a disordered region. One copy of the WD 8; interaction with SEC13 repeat lies at 397–428 (SFAFGGKLVTLDNIKPTAQQPQQTAAHVVHIS). 3 disordered regions span residues 818–892 (PMQT…QSPA), 983–1008 (CFQH…GTQH), and 1058–1125 (PPAP…PGAP). Positions 832–846 (AQPAAPAVPPQYYQQ) are enriched in low complexity. 2 stretches are compositionally biased toward polar residues: residues 847–863 (GRSA…TPTA) and 872–881 (VPSSDPQGDS). Positions 1080-1091 (QTLQPQQQVPDQ) are enriched in low complexity.

This sequence belongs to the WD repeat SEC31 family. As to quaternary structure, COPII is composed of at least 5 proteins: the SEC23/24 complex, the SEC13/31 complex and SAR1. SEC13 and SEC31 make a 2:2 tetramer that forms the edge element of the COPII outer coat. The tetramer self-assembles in multiple copies to form the complete polyhedral cage. Interacts (via WD 8) with SEC13.

It is found in the cytoplasm. The protein localises to the cytoplasmic vesicle. The protein resides in the COPII-coated vesicle membrane. Its subcellular location is the endoplasmic reticulum membrane. Its function is as follows. Component of the coat protein complex II (COPII) which promotes the formation of transport vesicles from the endoplasmic reticulum (ER). The coat has two main functions, the physical deformation of the endoplasmic reticulum membrane into vesicles and the selection of cargo molecules. This chain is Protein transport protein Sec31A (sec31a), found in Danio rerio (Zebrafish).